The chain runs to 299 residues: MNSFIRPIEGNNTLWRYFFAFLVMVGLYVLGNIAYLFAILFTVIVNPNITFDLDEAVLSDPLVDLYLSHVIYLFAIPGVWLAVRFILKRPFRTVITPNSKMNWRRISFGFIAYFLLMIAVQLIDFVIHPDSYSMQEFNASRFIWLLAAALILVPIQTSAEELFFRGFLLQAFGRLTKNPLFLTLIVGGLFGVLHFANPEMNNGAVWAGIEYLTFGFVWTYYTIKTGSIEISLGAHAANNMFLCMFITEKNSVYGGIPSLFTVTRGNPMWEAFFTIAVNLVFAGIALWYHKKSKSKQQGS.

This is an uncharacterized protein from Bacillus subtilis (strain 168).